Consider the following 470-residue polypeptide: GTPase Der (470 aa).

2 EngA-type G domains span residues 32-195 (PVVA…PTIS) and 206-379 (RRVA…KSWD). GTP contacts are provided by residues 38–45 (GRPNVGKS), 85–89 (DTGGW), 147–150 (NKVD), 212–219 (GKPNVGKS), 259–263 (DTAGL), and 324–327 (NKWD). The 83-residue stretch at 380 to 462 (TRVSTGRLNT…PIRINVRVRE (83 aa)) folds into the KH-like domain.

It belongs to the TRAFAC class TrmE-Era-EngA-EngB-Septin-like GTPase superfamily. EngA (Der) GTPase family. Associates with the 50S ribosomal subunit.

Functionally, GTPase that plays an essential role in the late steps of ribosome biogenesis. This is GTPase Der from Mycolicibacterium vanbaalenii (strain DSM 7251 / JCM 13017 / BCRC 16820 / KCTC 9966 / NRRL B-24157 / PYR-1) (Mycobacterium vanbaalenii).